The primary structure comprises 352 residues: Protein Wnt-2 (352 aa).

An N-terminal signal peptide occupies residues 1–23 (MWKIHNKLLIYILWIMEIRLVSS). Disulfide bonds link Cys-65/Cys-76, Cys-115/Cys-123, Cys-125/Cys-148, Cys-196/Cys-210, Cys-198/Cys-205, Cys-281/Cys-312, Cys-297/Cys-307, Cys-311/Cys-351, Cys-327/Cys-342, Cys-329/Cys-339, and Cys-334/Cys-335. Residues Asn-75 and Asn-119 are each glycosylated (N-linked (GlcNAc...) asparagine). A lipid anchor (O-palmitoleoyl serine; by PORCN) is attached at Ser-202.

It belongs to the Wnt family. Palmitoleoylated by porcupine. The lipid group functions as a sorting signal, targeting the ligand to polarized vesicles that transport Wnt2 to unique sites at the cell surface. Depalmitoleoylated by notum, leading to inhibit Wnt signaling pathway. As to expression, dynamic expression pattern during embryogenesis. Expression is predominantly segmented, with expression also seen in the limb primordia and presumptive gonads. In embryonic tracheal cells, expression is close to and dorsal to the tracheal placode.

The protein resides in the secreted. Its subcellular location is the extracellular space. It is found in the extracellular matrix. Its function is as follows. Binds as a ligand to a family of frizzled seven-transmembrane receptors and acts through a cascade of genes on the nucleus. Segment polarity protein. May function in gonadogenesis and limb development. Wg and Wnt2 have a role in the developing trachea and together are responsible for all dorsal trunk formation. The sequence is that of Protein Wnt-2 (Wnt2) from Drosophila melanogaster (Fruit fly).